Reading from the N-terminus, the 287-residue chain is Large ribosomal subunit protein uL2 (287 aa).

The tract at residues 203-287 (LSAGKAGRNR…SKRGRGGRES (85 aa)) is disordered. Basic residues-rich tracts occupy residues 209–220 (GRNRWKGRRPKV) and 258–287 (KTRK…GRES).

It belongs to the universal ribosomal protein uL2 family. Part of the 50S ribosomal subunit. Forms a bridge to the 30S subunit in the 70S ribosome.

Its function is as follows. One of the primary rRNA binding proteins. Required for association of the 30S and 50S subunits to form the 70S ribosome, for tRNA binding and peptide bond formation. It has been suggested to have peptidyltransferase activity; this is somewhat controversial. Makes several contacts with the 16S rRNA in the 70S ribosome. The sequence is that of Large ribosomal subunit protein uL2 from Nostoc sp. (strain PCC 7120 / SAG 25.82 / UTEX 2576).